The following is a 143-amino-acid chain: Large ribosomal subunit protein uL11 (143 aa).

Belongs to the universal ribosomal protein uL11 family. In terms of assembly, part of the ribosomal stalk of the 50S ribosomal subunit. Interacts with L10 and the large rRNA to form the base of the stalk. L10 forms an elongated spine to which L12 dimers bind in a sequential fashion forming a multimeric L10(L12)X complex. One or more lysine residues are methylated.

Forms part of the ribosomal stalk which helps the ribosome interact with GTP-bound translation factors. This is Large ribosomal subunit protein uL11 from Psychrobacter sp. (strain PRwf-1).